Here is a 274-residue protein sequence, read N- to C-terminus: 2,3,4,5-tetrahydropyridine-2,6-dicarboxylate N-succinyltransferase (274 aa).

Residues Arg-106 and Asp-143 each contribute to the substrate site.

Belongs to the transferase hexapeptide repeat family. In terms of assembly, homotrimer.

The protein localises to the cytoplasm. It carries out the reaction (S)-2,3,4,5-tetrahydrodipicolinate + succinyl-CoA + H2O = (S)-2-succinylamino-6-oxoheptanedioate + CoA. It participates in amino-acid biosynthesis; L-lysine biosynthesis via DAP pathway; LL-2,6-diaminopimelate from (S)-tetrahydrodipicolinate (succinylase route): step 1/3. The sequence is that of 2,3,4,5-tetrahydropyridine-2,6-dicarboxylate N-succinyltransferase from Rickettsia typhi (strain ATCC VR-144 / Wilmington).